The primary structure comprises 959 residues: E3 ubiquitin-protein ligase NEDD4-like (959 aa).

In terms of domain architecture, C2 spans 10–130 (PWHGVCVPVC…TEDPTMERPY (121 aa)). Disordered regions lie at residues 183–206 (SNDS…WEEK), 248–275 (AAHR…DVPE), and 289–316 (DSLG…EELS). A WW 1 domain is found at 197–230 (PPLPPGWEEKVDNLGRTYYVNHNNRTTQWHRPSL). A Phosphoserine modification is found at S316. A Phosphothreonine modification is found at T322. Residue S346 is modified to Phosphoserine; by WNK1 and WNK4. The region spanning 369–402 (PGLPSGWEERKDAKGRTYYVNHNNRTTTWTRPIM) is the WW 2 domain. The disordered stretch occupies residues 408 to 478 (GASGSATNSN…YNSPKPQHKV (71 aa)). S430 carries the phosphoserine modification. S432 carries the post-translational modification Phosphoserine; by SGK1. The residue at position 433 (S433) is a Phosphoserine; by WNK1 and WNK4. A compositionally biased stretch (basic and acidic residues) spans 444 to 455 (GAKDSPVRRAVK). The residue at position 448 (S448) is a Phosphoserine; by SGK1. A phosphoserine mark is found at S459, S463, S467, and S471. WW domains are found at residues 481-514 (SFLP…DPRL) and 532-565 (GPLP…DPRL). Residues 624–958 (RPDVLKARLW…VENAQGFEGV (335 aa)) form the HECT domain. The active-site Glycyl thioester intermediate is the C926.

As to quaternary structure, interacts with UBE2E3. Interacts with NDFIP1; this interaction activates the E3 ubiquitin-protein ligase. Interacts with NDFIP2; this interaction activates the E3 ubiquitin-protein ligase. Interacts (via WW domains) with SCN1A. Interacts (via WW domains) with SCN2A. Interacts (via WW domains) with SCN3A. Interacts (via WW domains) with SCN5A. Interacts (via WW domains) with SCN8A. Interacts (via WW domains) with SCN9A. Interacts (via WW domains) with SCN10A. Interacts (via WW domains) with CLCN5. Interacts with SMAD2. Interacts with SMAD3. Interacts with SMAD6. Interacts with SMAD7. The phosphorylated form interacts with 14-3-3 proteins. Interacts with TNK2. Interacts with WNK1. Interacts with SGK1. Interacts (via C2 domain) with NPC2. Interacts with ARRDC4. Interacts with KCNQ1; promotes internalization of KCNQ1. Interacts (via domains WW1, 3 and 4) with USP36; the interaction inhibits ubiquitination of, at least, NTRK1, KCNQ2 and KCNQ3 by NEDD4L. Interacts with PRRG4 (via cytoplasmic domain). Interacts with LDLRAD3; the interaction is direct. Interacts with TTYH2 and TTYH3. In terms of processing, phosphorylated; which impairs interaction with SCNN. Interaction with YWHAH inhibits dephosphorylation. Auto-ubiquitinated.

It localises to the cytoplasm. It is found in the golgi apparatus. The protein localises to the endosome. Its subcellular location is the multivesicular body. The catalysed reaction is S-ubiquitinyl-[E2 ubiquitin-conjugating enzyme]-L-cysteine + [acceptor protein]-L-lysine = [E2 ubiquitin-conjugating enzyme]-L-cysteine + N(6)-ubiquitinyl-[acceptor protein]-L-lysine.. The protein operates within protein modification; protein ubiquitination. Activated by NDFIP1- and NDFIP2-binding. Functionally, E3 ubiquitin-protein ligase which accepts ubiquitin from an E2 ubiquitin-conjugating enzyme in the form of a thioester and then directly transfers the ubiquitin to targeted substrates. Inhibits TGF-beta signaling by triggering SMAD2 and TGFBR1 ubiquitination and proteasome-dependent degradation. Promotes ubiquitination and internalization of various plasma membrane channels such as ENaC, Nav1.2, Nav1.3, Nav1.5, Nav1.7, Nav1.8, Kv1.3, KCNH2, EAAT1 or CLC5. Promotes ubiquitination and degradation of SGK1 and TNK2. Ubiquitinates BRAT1 and this ubiquitination is enhanced in the presence of NDFIP1. Plays a role in dendrite formation by melanocytes. Involved in the regulation of TOR signaling. Ubiquitinates TTYH2 and TTYH3 and regulates protein levels of TTYH2. This is E3 ubiquitin-protein ligase NEDD4-like (NEDD4L) from Pongo abelii (Sumatran orangutan).